The sequence spans 449 residues: Dynein axonemal assembly factor 3 (449 aa).

The protein belongs to the DNAAF3 family.

The protein localises to the cytoplasm. It is found in the dynein axonemal particle. Functionally, required for the assembly of axonemal inner and outer dynein arms. Involved in preassembly of dyneins into complexes before their transport into cilia. In Xenopus tropicalis (Western clawed frog), this protein is Dynein axonemal assembly factor 3 (dnaaf3).